The sequence spans 184 residues: UPS-like protein C36.10 (184 aa).

The PRELI/MSF1 domain occupies 1–172 (MKIFESCHLF…VLEKINMSVF (172 aa)).

Belongs to the slowmo family.

The protein localises to the cytoplasm. The protein resides in the mitochondrion inner membrane. Its subcellular location is the mitochondrion intermembrane space. Functionally, required for mitochondrial morphology. May control phospholipid metabolism in the mitochondrial intermembrane space. This Schizosaccharomyces pombe (strain 972 / ATCC 24843) (Fission yeast) protein is UPS-like protein C36.10.